Here is a 172-residue protein sequence, read N- to C-terminus: SsrA-binding protein (172 aa).

Belongs to the SmpB family.

It localises to the cytoplasm. Functionally, required for rescue of stalled ribosomes mediated by trans-translation. Binds to transfer-messenger RNA (tmRNA), required for stable association of tmRNA with ribosomes. tmRNA and SmpB together mimic tRNA shape, replacing the anticodon stem-loop with SmpB. tmRNA is encoded by the ssrA gene; the 2 termini fold to resemble tRNA(Ala) and it encodes a 'tag peptide', a short internal open reading frame. During trans-translation Ala-aminoacylated tmRNA acts like a tRNA, entering the A-site of stalled ribosomes, displacing the stalled mRNA. The ribosome then switches to translate the ORF on the tmRNA; the nascent peptide is terminated with the 'tag peptide' encoded by the tmRNA and targeted for degradation. The ribosome is freed to recommence translation, which seems to be the essential function of trans-translation. The chain is SsrA-binding protein from Dehalococcoides mccartyi (strain CBDB1).